A 1183-amino-acid polypeptide reads, in one-letter code: Atrophin-1 (1183 aa).

Disordered regions lie at residues 1-603, 617-760, and 780-855; these read MKTR…ITTS, SPAG…ARFN, and LEGS…HRPP. The Nuclear localization signal signature appears at 16–32; the sequence is RKKEAPGPREELRSRGR. Residues 17-29 are compositionally biased toward basic and acidic residues; sequence KKEAPGPREELRS. Ser-34 bears the Phosphoserine mark. The span at 45-63 shows a compositional bias: basic and acidic residues; the sequence is GKAEKSRQTAKKARVEETS. A phosphoserine mark is found at Ser-77, Ser-79, Ser-100, Ser-102, and Ser-106. Basic and acidic residues predominate over residues 107-127; sequence LDGRSINDDGSSDPRDIDQDN. Residues 128–151 are compositionally biased toward polar residues; the sequence is RSTSPSIYSPGSVENDSDSSSGLS. Pro residues-rich tracts occupy residues 157-173 and 207-218; these read PYHPPPLFPPSPPPPDS and GPPPGAPPPHPQ. Residues 261-272 are compositionally biased toward low complexity; the sequence is IPISSSGASGAP. A compositionally biased stretch (pro residues) spans 344-373; that stretch reads PPGPEKGPTLAPSPHPLPPASSSAPGPPMR. A compositionally biased stretch (low complexity) spans 377-400; sequence SSCSSSSVAASSSSSAATSQYPAS. Residues 415 to 436 show a composition bias toward polar residues; sequence SMSVSNQPPKYTQPSLPSQAVW. The segment at 510–560 is involved in binding BAIAP2; that stretch reads HPLESSNSHHAHPYNMSPSLGSLRPYPPGPAHLPPSHGQVSYSQAGPNGPP. Positions 562–584 are enriched in low complexity; it reads SSSSNSSGSSSQAAYSCSHPSSS. Ser-625 bears the Phosphoserine mark. N6-acetyllysine is present on Lys-634. At Thr-646 the chain carries Phosphothreonine. Ser-654 is modified (phosphoserine). The residue at position 662 (Thr-662) is a Phosphothreonine. 2 stretches are compositionally biased toward pro residues: residues 701–711 and 732–745; these read LPPPPAAPTTG and SPVPPARSPSPPPK. Residue Ser-732 is modified to Phosphoserine; by MAPK8. Residues Ser-739 and Ser-741 each carry the phosphoserine modification. Positions 788-832 are enriched in basic and acidic residues; sequence KRADLVEKVRREAEQRAREEKEREREREREKEREREKERELERSV. The interval 872 to 887 is required for interaction with FAT1; that stretch reads DTPALRTLSEYARPHV. Ser-889 is subject to Phosphoserine. The interval 921–940 is disordered; that stretch reads PAAREREREARERDLRDRLK. Residues 922-940 show a composition bias toward basic and acidic residues; the sequence is AAREREREARERDLRDRLK. Positions 1026–1034 match the Nuclear export signal motif; sequence ALGNDPLAR. The residue at position 1108 (Arg-1108) is an Asymmetric dimethylarginine. A Glycyl lysine isopeptide (Lys-Gly) (interchain with G-Cter in SUMO2) cross-link involves residue Lys-1176.

In terms of assembly, interacts with NR2E1; the interaction represses the transcriptional activity of NR2E1. Interact (via its N-terminus) with FAT1 (via a C-terminal domain). Interacts with BAIAP2, WWP1, WWP2, WWP3 and RERE. Interacts (via its N-terminus) with MTG8; the interaction enhances transcriptional repression of MTG8. Interacts with PQBP1. Post-translationally, phosphorylated in vitro by MAPK8/JNK1 on Ser-732. Predominant neuronal expression, Expressed in most brain regions including striatum, hippocampus, cerebral cortex, diencephalon, brain stem and cerebellum. Highest levels in cerebellum. Also highly expressed in kidney and testis, low expression in skeletal muscle and heart.

It localises to the nucleus. The protein resides in the cytoplasm. The protein localises to the perinuclear region. Its subcellular location is the cell junction. In terms of biological role, transcriptional corepressor. Recruits NR2E1 to repress transcription. Promotes vascular smooth cell (VSMC) migration and orientation. Corepressor of MTG8 transcriptional repression. Has some intrinsic repression activity. The sequence is that of Atrophin-1 (Atn1) from Rattus norvegicus (Rat).